The chain runs to 1091 residues: E3 ubiquitin-protein ligase TRIM33 (1091 aa).

Over residues M1–E13 the composition is skewed to gly residues. Positions M1–S87 are disordered. Low complexity predominate over residues A52 to S87. The RING-type 1 zinc-finger motif lies at C97–R154. Residues K180–K227 form a B box-type 1; atypical zinc finger. Zn(2+)-binding residues include C185, C188, C209, H213, C245, H248, C268, and H273. The segment at Q240–L281 adopts a B box-type 2 zinc-finger fold. The stretch at Q269–Q361 forms a coiled coil. Disordered stretches follow at residues L672–L779 and G821–K844. The segment covering P675–R721 has biased composition (low complexity). The span at K754–R763 shows a compositional bias: basic and acidic residues. Over residues L768 to L779 the composition is skewed to low complexity. Residues E850–L897 form a PHD-type zinc finger. In terms of domain architecture, Bromo spans G920–I1043. The disordered stretch occupies residues P1051–K1091. The span at F1055–F1073 shows a compositional bias: acidic residues. Basic and acidic residues predominate over residues K1082–K1091.

As to quaternary structure, may interact with smad4.

It is found in the nucleus. It carries out the reaction S-ubiquitinyl-[E2 ubiquitin-conjugating enzyme]-L-cysteine + [acceptor protein]-L-lysine = [E2 ubiquitin-conjugating enzyme]-L-cysteine + N(6)-ubiquitinyl-[acceptor protein]-L-lysine.. Its pathway is protein modification; protein ubiquitination. Functionally, acts as an E3 ubiquitin-protein ligase for smad4. Promotes ectoderm embryonic development at the expense of other germ layers. Inhibits mesodermal differentiation. Promotes neural development of the ectoderm. Promotes smad4 alpha degradation via the ubiquitin proteasome pathway. May act as a transcriptional repressor. This Xenopus laevis (African clawed frog) protein is E3 ubiquitin-protein ligase TRIM33 (trim33).